The sequence spans 553 residues: Membrane protein insertase YidC (553 aa).

5 helical membrane passes run 7–24 (VLWV…DNWQ), 365–385 (WGWA…PLSA), 435–455 (LPVV…LASV), 474–494 (PYFI…SLNP), and 509–529 (PIAF…YYVV).

The protein belongs to the OXA1/ALB3/YidC family. Type 1 subfamily. As to quaternary structure, interacts with the Sec translocase complex via SecD. Specifically interacts with transmembrane segments of nascent integral membrane proteins during membrane integration.

It localises to the cell inner membrane. Required for the insertion and/or proper folding and/or complex formation of integral membrane proteins into the membrane. Involved in integration of membrane proteins that insert both dependently and independently of the Sec translocase complex, as well as at least some lipoproteins. Aids folding of multispanning membrane proteins. The sequence is that of Membrane protein insertase YidC from Burkholderia multivorans (strain ATCC 17616 / 249).